We begin with the raw amino-acid sequence, 88 residues long: MGSLRVSTVVIAVVACLSILLISPTEVDGRLVCDTPAGTCTSSSTCNDQCNTWGGNYSGGECADSSFPGLSICYCCHYVGSSAEMESM.

The signal sequence occupies residues 1-29; the sequence is MGSLRVSTVVIAVVACLSILLISPTEVDG. Cystine bridges form between Cys-33–Cys-76, Cys-40–Cys-62, Cys-46–Cys-73, and Cys-50–Cys-75.

This sequence belongs to the DEFL family.

It localises to the secreted. This chain is Defensin-like protein 98, found in Arabidopsis thaliana (Mouse-ear cress).